A 333-amino-acid polypeptide reads, in one-letter code: Cinnamoyl-CoA reductase 1 (333 aa).

Residues 13–19 (GAGGFIA), Arg38, Lys44, 64–65 (DL), 84–86 (TAS), Tyr157, Lys161, 184–187 (PVLV), and Ser199 contribute to the NADP(+) site. Cys150 and Cys158 form a disulfide bridge. The Proton donor role is filled by Lys161.

Belongs to the NAD(P)-dependent epimerase/dehydratase family. Dihydroflavonol-4-reductase subfamily. In terms of processing, the formation of a reversible disulfide bond reduces activity by perturbing the positioning of nearby catalytic residues. As to expression, expressed in flowers, leaves and stems.

The protein localises to the cytoplasm. It carries out the reaction (E)-coniferaldehyde + NADP(+) + CoA = (E)-feruloyl-CoA + NADPH + H(+). The enzyme catalyses (E)-4-coumaraldehyde + NADP(+) + CoA = (E)-4-coumaroyl-CoA + NADPH + H(+). It catalyses the reaction (E)-sinapaldehyde + NADP(+) + CoA = (E)-sinapoyl-CoA + NADPH + H(+). The catalysed reaction is (E)-cinnamaldehyde + NADP(+) + CoA = (E)-cinnamoyl-CoA + NADPH + H(+). Its pathway is aromatic compound metabolism; phenylpropanoid biosynthesis. With respect to regulation, inhibited by sodium iodide-mediated oxidation. Involved in the latter stages of lignin biosynthesis. Catalyzes one of the last steps of monolignol biosynthesis, the conversion of cinnamoyl-CoAs into their corresponding cinnamaldehydes. Mediates the conversion of feruloyl CoA to coniferylaldehyde. Also active toward p-coumaroyl-CoA and sinapoyl-CoA. Involved in the production of floral volatile phenylpropanoids in flowers of fragrant cultivars (e.g. cv. Mitchell and cv. V26) from cinnamic acid, a common precursor with the anthocyanin biosynthesis pathway involved in flower pigmentation. This chain is Cinnamoyl-CoA reductase 1, found in Petunia hybrida (Petunia).